The sequence spans 234 residues: Synaptogyrin-1 (234 aa).

Position 1 is an N-acetylmethionine (methionine 1). Topologically, residues 1–23 (MEGGAYGAGKAGGAFDPYTLVRQ) are cytoplasmic. Residues 20–173 (LVRQPHTILR…QAVLAFQRYQ (154 aa)) form the MARVEL domain. Residues 24–44 (PHTILRVVSWVFSIVVFGSIV) form a helical membrane-spanning segment. Residues 45–71 (NEGYLNNPEEEEEFCIYNRNPNACSYG) lie on the Lumenal side of the membrane. A helical transmembrane segment spans residues 72-92 (VTVGVLAFLTCLLYLALDVYF). Topologically, residues 93–103 (PQISSVKDRKK) are cytoplasmic. A helical transmembrane segment spans residues 104-124 (AVLSDIGVSAFWAFFWFVGFC). Over 125–148 (FLANQWQVSKPKDNPLNEGTDAAR) the chain is Lumenal. A helical transmembrane segment spans residues 149–169 (AAIAFSFFSIFTWAGQAVLAF). Topologically, residues 170 to 234 (QRYQIGADSA…EPQGYQSQGY (65 aa)) are cytoplasmic. Residues 201 to 234 (EPSAGSDPAGMGGTYQHPANAFDAEPQGYQSQGY) are disordered.

Belongs to the synaptogyrin family.

The protein resides in the cytoplasmic vesicle. Its subcellular location is the secretory vesicle. The protein localises to the synaptic vesicle membrane. It localises to the melanosome. In terms of biological role, may play a role in regulated exocytosis. Modulates the localization of synaptophysin/SYP into synaptic-like microvesicles and may therefore play a role in synaptic-like microvesicle formation and/or maturation. Involved in the regulation of short-term and long-term synaptic plasticity. This chain is Synaptogyrin-1, found in Mus musculus (Mouse).